Here is an 838-residue protein sequence, read N- to C-terminus: Protein translocase subunit SecA (838 aa).

ATP contacts are provided by residues Gln-86, Gly-104 to Thr-108, and Asp-493. Residues Asn-793–Gln-838 form a disordered region. Positions 824, 826, 835, and 836 each coordinate Zn(2+).

It belongs to the SecA family. In terms of assembly, monomer and homodimer. Part of the essential Sec protein translocation apparatus which comprises SecA, SecYEG and auxiliary proteins SecDF. Other proteins may also be involved. Zn(2+) serves as cofactor.

It is found in the cell membrane. Its subcellular location is the cytoplasm. The catalysed reaction is ATP + H2O + cellular proteinSide 1 = ADP + phosphate + cellular proteinSide 2.. Part of the Sec protein translocase complex. Interacts with the SecYEG preprotein conducting channel. Has a central role in coupling the hydrolysis of ATP to the transfer of proteins into and across the cell membrane, serving as an ATP-driven molecular motor driving the stepwise translocation of polypeptide chains across the membrane. In Oceanobacillus iheyensis (strain DSM 14371 / CIP 107618 / JCM 11309 / KCTC 3954 / HTE831), this protein is Protein translocase subunit SecA.